Reading from the N-terminus, the 116-residue chain is Hydrogenase maturation factor HypA (116 aa).

Residue His-2 coordinates Ni(2+). Zn(2+)-binding residues include Cys-73, Cys-76, Cys-90, and Cys-93.

This sequence belongs to the HypA/HybF family.

Its function is as follows. Involved in the maturation of [NiFe] hydrogenases. Required for nickel insertion into the metal center of the hydrogenase. The polypeptide is Hydrogenase maturation factor HypA (Escherichia coli O6:H1 (strain CFT073 / ATCC 700928 / UPEC)).